The following is a 513-amino-acid chain: GMP synthase [glutamine-hydrolyzing] (513 aa).

Residues S3–D200 form the Glutamine amidotransferase type-1 domain. The Nucleophile role is filled by C80. Residues H174 and E176 contribute to the active site. The GMPS ATP-PPase domain maps to W201–R388. ATP is bound at residue S228–S234.

In terms of assembly, homodimer.

It carries out the reaction XMP + L-glutamine + ATP + H2O = GMP + L-glutamate + AMP + diphosphate + 2 H(+). It participates in purine metabolism; GMP biosynthesis; GMP from XMP (L-Gln route): step 1/1. Catalyzes the synthesis of GMP from XMP. The protein is GMP synthase [glutamine-hydrolyzing] of Chlorobium limicola (strain DSM 245 / NBRC 103803 / 6330).